The chain runs to 462 residues: Bifunctional enzyme LpxC/FabZ (462 aa).

The UDP-3-O-acyl-N-acetylglucosamine deacetylase stretch occupies residues 1 to 302 (MQKQQTLKDK…MARLIRKEIK (302 aa)). Zn(2+) is bound by residues His78, His260, and Asp264. The active-site Proton donor is the His287. The segment at 303–462 (QNEAQAPVYN…FMAQIIQNKE (160 aa)) is 3-hydroxyacyl-[acyl-carrier-protein] dehydratase. Residue His364 is part of the active site.

In the N-terminal section; belongs to the LpxC family. This sequence in the C-terminal section; belongs to the thioester dehydratase family. Zn(2+) is required as a cofactor.

Its subcellular location is the cytoplasm. It carries out the reaction a UDP-3-O-[(3R)-3-hydroxyacyl]-N-acetyl-alpha-D-glucosamine + H2O = a UDP-3-O-[(3R)-3-hydroxyacyl]-alpha-D-glucosamine + acetate. It catalyses the reaction a (3R)-hydroxyacyl-[ACP] = a (2E)-enoyl-[ACP] + H2O. It participates in glycolipid biosynthesis; lipid IV(A) biosynthesis; lipid IV(A) from (3R)-3-hydroxytetradecanoyl-[acyl-carrier-protein] and UDP-N-acetyl-alpha-D-glucosamine: step 2/6. In terms of biological role, catalyzes the hydrolysis of UDP-3-O-myristoyl-N-acetylglucosamine to form UDP-3-O-myristoylglucosamine and acetate, the committed step in lipid A biosynthesis. Functionally, involved in unsaturated fatty acids biosynthesis. Catalyzes the dehydration of short chain beta-hydroxyacyl-ACPs and long chain saturated and unsaturated beta-hydroxyacyl-ACPs. This Porphyromonas gingivalis (strain ATCC BAA-308 / W83) protein is Bifunctional enzyme LpxC/FabZ (lpxC/fabZ).